Here is a 614-residue protein sequence, read N- to C-terminus: WD repeat-containing protein 26 (614 aa).

2 stretches are compositionally biased toward low complexity: residues 1 to 19 (MQAN…AGSG) and 34 to 44 (SNGVLSSNNGL). The interval 1 to 65 (MQANGAAAAA…PGGRKKKRLS (65 aa)) is disordered. In terms of domain architecture, LisH spans 67-99 (ADEDVIRLIGQHLHGLGLNQTVDLLMQESGCRL). The CTLH domain maps to 100–184 (EHPSATKFRN…EYLEDGKVLE (85 aa)). WD repeat units follow at residues 306-345 (EHCN…HQLK), 352-391 (GHAY…GELR), 397-437 (SHED…DSWE), 477-516 (QEDH…LVRK), 519-561 (GVTQ…PIAE), and 564-604 (GHTR…DNQE).

In terms of assembly, forms homooligomers. Identified in the CTLH complex that contains at least MAEA, RMND5A (or alternatively its paralog RMND5B), GID8, WDR26, and RANBP9 and/or RANBP10. Interacts with DDB1-CUL4A/B E3 ligase complexes.

Its subcellular location is the cytoplasm. It localises to the nucleus. The protein resides in the mitochondrion. Its function is as follows. G-beta-like protein involved in cell signal transduction. Acts as a negative regulator in MAPK signaling pathway. Functions as a scaffolding protein to promote G beta:gamma-mediated PLCB2 plasma membrane translocation and subsequent activation in leukocytes. Core component of the CTLH E3 ubiquitin-protein ligase complex that mediates ubiquitination and subsequent proteasomal degradation of target proteins. Acts as a negative regulator of the canonical Wnt signaling pathway through preventing ubiquitination of beta-catenin CTNNB1 by the beta-catenin destruction complex, thus negatively regulating CTNNB1 degradation. Serves as a scaffold to coordinate PI3K/AKT pathway-driven cell growth and migration. Protects cells from oxidative stress-induced apoptosis via the down-regulation of AP-1 transcriptional activity as well as by inhibiting cytochrome c release from mitochondria. Also protects cells by promoting hypoxia-mediated autophagy and mitophagy. The sequence is that of WD repeat-containing protein 26 (wdr26) from Xenopus tropicalis (Western clawed frog).